The sequence spans 198 residues: Ribosome maturation factor RimP (198 aa).

It belongs to the RimP family.

Its subcellular location is the cytoplasm. In terms of biological role, required for maturation of 30S ribosomal subunits. The chain is Ribosome maturation factor RimP from Rhizobium etli (strain CIAT 652).